A 451-amino-acid chain; its full sequence is DNA-directed RNA polymerase subunit Rpo1C (451 aa).

A unknown region spans residues 1 to 68 (MQDIIGKIED…DDDELLDAVE (68 aa)). The DNA-directed RNA polymerase subunit Rpo1C stretch occupies residues 69–451 (DDYQRILKVQ…SVSVVMKERK (383 aa)).

It belongs to the RNA polymerase beta' chain family. As to quaternary structure, part of the RNA polymerase complex.

It localises to the cytoplasm. The enzyme catalyses RNA(n) + a ribonucleoside 5'-triphosphate = RNA(n+1) + diphosphate. In terms of biological role, DNA-dependent RNA polymerase (RNAP) catalyzes the transcription of DNA into RNA using the four ribonucleoside triphosphates as substrates. Forms part of the jaw domain. This is DNA-directed RNA polymerase subunit Rpo1C from Methanothermobacter thermautotrophicus (strain ATCC 29096 / DSM 1053 / JCM 10044 / NBRC 100330 / Delta H) (Methanobacterium thermoautotrophicum).